A 629-amino-acid chain; its full sequence is Dehydrogenase pyvF (629 aa).

The N-terminal stretch at methionine 1–glycine 22 is a signal peptide. FAD is bound by residues alanine 61 to serine 62 and glutamate 82 to alanine 83. The N-linked (GlcNAc...) asparagine glycan is linked to asparagine 92. Asparagine 144–alanine 147 provides a ligand contact to FAD. Residues asparagine 172, asparagine 182, asparagine 256, asparagine 284, asparagine 312, and asparagine 421 are each glycosylated (N-linked (GlcNAc...) asparagine). Residue histidine 552 is the Proton acceptor of the active site. FAD contacts are provided by residues alanine 586 and proline 597–leucine 598.

The protein belongs to the GMC oxidoreductase family. Homodimer. Requires FAD as cofactor.

Its pathway is secondary metabolite biosynthesis. In terms of biological role, dehydrogenase; part of the gene cluster that mediates the biosynthesis of pyranoviolin A, a pyranonigrin analog with a C-3 methoxy group. Initially, the PKS portion of pyvA synthesizes C-10 carbon chain from 5 molecules of malonyl-CoA, which is then condensed with the thiolation (T) domain-bound glycine activated by the adenylation (A) domain. The subsequent chain release by Dieckmann condensation (DKC) could be catalyzed by the TE domain present at the C-terminus of pyvA and/or the alpha/beta hydrolase pyvD, installing the tetramic acid moiety. The FAD-dependent monooxygenase pyvC next epoxidizes one of the olefins of the polyketide part, and the epoxide ring-opening induces the dihydro-gamma-pyrone ring formation. The cytochrome P450 monooxygeanse pyvB would be responsible for the 2 consecutive reactions, in which the dihydro-gamma-pyrone is oxidized to gamma-pyrone and C-7 is hydroxylated to yield pyranonigrin F. Finally, the O-methyltransferase pyvH methylates the C-3 hydroxy group to complete the biosynthesis. The chain is Dehydrogenase pyvF from Aspergillus violaceofuscus (strain CBS 115571).